The sequence spans 613 residues: Myrcene synthase, chloroplastic (613 aa).

Residues 1–46 (MQCMAVHQFAPLLSLLNCSRISSDFGRLFTPKTSTKSRSSTCHPIQ) constitute a chloroplast transit peptide. 3 residues coordinate (2E)-geranyl diphosphate: Arg-324, Asp-361, and Asp-365. Residues Asp-361 and Asp-365 each contribute to the Mg(2+) site. The DDXXD motif signature appears at 361–365 (DDIYD). A helical transmembrane segment spans residues 455 to 475 (IEMAWLSIGGPVILVHAYFCF). 2 residues coordinate (2E)-geranyl diphosphate: Arg-503 and Asp-506. Mg(2+) contacts are provided by Asp-506, Thr-510, and Glu-514.

Belongs to the terpene synthase family. Tpsb subfamily. It depends on Mg(2+) as a cofactor. Mn(2+) is required as a cofactor. Expressed in trichomes.

The protein resides in the plastid. It is found in the chloroplast membrane. The catalysed reaction is (2E)-geranyl diphosphate = beta-myrcene + diphosphate. Its pathway is secondary metabolite biosynthesis; terpenoid biosynthesis. Functionally, monoterpene synthase that catalyzes the formation of myrcene. Can use geranyl diphosphate as substrate, but not farnesyl diphosphate or geranylgeranyl diphosphate. This Humulus lupulus (European hop) protein is Myrcene synthase, chloroplastic.